The primary structure comprises 182 residues: UPF0316 protein lp_1140 (182 aa).

3 helical membrane passes run 1 to 21 (MHID…YITL), 36 to 56 (FAAF…SLVL), and 62 to 82 (PINL…GMVI).

The protein belongs to the UPF0316 family.

The protein resides in the cell membrane. The protein is UPF0316 protein lp_1140 of Lactiplantibacillus plantarum (strain ATCC BAA-793 / NCIMB 8826 / WCFS1) (Lactobacillus plantarum).